Here is a 142-residue protein sequence, read N- to C-terminus: 3-hydroxyacyl-[acyl-carrier-protein] dehydratase FabZ (142 aa).

The active site involves His-48.

This sequence belongs to the thioester dehydratase family. FabZ subfamily.

It is found in the cytoplasm. The catalysed reaction is a (3R)-hydroxyacyl-[ACP] = a (2E)-enoyl-[ACP] + H2O. Its function is as follows. Involved in unsaturated fatty acids biosynthesis. Catalyzes the dehydration of short chain beta-hydroxyacyl-ACPs and long chain saturated and unsaturated beta-hydroxyacyl-ACPs. The protein is 3-hydroxyacyl-[acyl-carrier-protein] dehydratase FabZ of Clostridioides difficile (strain 630) (Peptoclostridium difficile).